A 107-amino-acid chain; its full sequence is MREFQRAAVRLHILHHAADNEVHGAWLTQELSRHGYRVSPGTLYPTLHRLEADGLLVSEQRVVDGRARRVYRATPAGRAALTEDRRALEELAREVLGGQSHTAGNGT.

The Cd(2+) site is built by His16, Glu30, His34, and His101.

Homodimer.

Functionally, may have transcription regulation and metal-detoxifying functions through which it may enhance intracellular survival of mycobacteria. Binds to its own promoter region and to the Rv1999c promoter region. It displays strong affinity for cadmium ions, but can also bind zinc, manganese and nickel. Expression increases the intracellular survival of recombinant M.smegmatis in murine macrophage cell line and increases its tolerance to cadmium ions. This chain is Transcriptional regulator Rv3488, found in Mycobacterium tuberculosis (strain ATCC 25618 / H37Rv).